Reading from the N-terminus, the 445-residue chain is Tubulin beta chain (445 aa).

8 residues coordinate GTP: Q11, E69, S138, G142, T143, G144, N204, and N226. E69 is a binding site for Mg(2+).

Belongs to the tubulin family. Dimer of alpha and beta chains. A typical microtubule is a hollow water-filled tube with an outer diameter of 25 nm and an inner diameter of 15 nM. Alpha-beta heterodimers associate head-to-tail to form protofilaments running lengthwise along the microtubule wall with the beta-tubulin subunit facing the microtubule plus end conferring a structural polarity. Microtubules usually have 13 protofilaments but different protofilament numbers can be found in some organisms and specialized cells. Mg(2+) is required as a cofactor.

It localises to the cytoplasm. Its subcellular location is the cytoskeleton. Its function is as follows. Tubulin is the major constituent of microtubules, a cylinder consisting of laterally associated linear protofilaments composed of alpha- and beta-tubulin heterodimers. Microtubules grow by the addition of GTP-tubulin dimers to the microtubule end, where a stabilizing cap forms. Below the cap, tubulin dimers are in GDP-bound state, owing to GTPase activity of alpha-tubulin. This chain is Tubulin beta chain, found in Leishmania mexicana.